We begin with the raw amino-acid sequence, 458 residues long: V-type ATP synthase beta chain (458 aa).

It belongs to the ATPase alpha/beta chains family.

Produces ATP from ADP in the presence of a proton gradient across the membrane. The V-type beta chain is a regulatory subunit. The chain is V-type ATP synthase beta chain from Enterococcus faecalis (strain ATCC 700802 / V583).